The chain runs to 868 residues: Spindle and centriole-associated protein 1 (868 aa).

4 disordered regions span residues 129-154, 172-201, 229-250, and 291-326; these read RTGF…DPGT, DDGG…HSNR, IAAQ…AEDQ, and KPLL…LASS. 2 stretches are compositionally biased toward polar residues: residues 190-200 and 229-245; these read ELPNSLSPHSN and IAAQ…SSEL. Threonine 236 is subject to Phosphothreonine. Position 240 is a phosphoserine (serine 240). Residues 315–326 show a composition bias toward low complexity; that stretch reads SSSTTSADLASS. A coiled-coil region spans residues 381–434; the sequence is RYLKESETQLRKEVETRQQLEQMLGDHRELIDALTAEILLLREENGAVQARLQQ. Disordered regions lie at residues 630–664 and 702–722; these read PQFV…LGDG and SSGG…NASE. Positions 634–649 are enriched in low complexity; the sequence is SLSQPPCSSPPSTQQS. Serine 655 is modified (phosphoserine). Residues 706-715 are compositionally biased toward basic and acidic residues; sequence EHGDGLREPS. Residues 736-764 are a coiled coil; the sequence is SSMEERIAELNRQSMEARSKLLQLIEQQK. Residues serine 772, serine 773, serine 776, and serine 831 each carry the phosphoserine modification. The interval 805 to 868 is disordered; that stretch reads SSKCNTVSPV…GWFALSAHLP (64 aa). Over residues 812-831 the composition is skewed to low complexity; sequence SPVSGVSSRRSSGAISNSCS.

Interacts with CEP120.

The protein resides in the cytoplasm. The protein localises to the cytoskeleton. Its subcellular location is the microtubule organizing center. It is found in the centrosome. It localises to the centriole. The protein resides in the spindle. In terms of biological role, regulator required for centriole duplication, for proper bipolar spindle formation and chromosome congression in mitosis. This Rattus norvegicus (Rat) protein is Spindle and centriole-associated protein 1 (Spice1).